The chain runs to 459 residues: SLIT-ROBO Rho GTPase-activating protein 2C (459 aa).

In terms of domain architecture, F-BAR spans 22-325 (KEIRAQLTEQ…AVENLDATSD (304 aa)). Residues 181 to 202 (LKEAEKQEEKQIGKSVKQEDRQ) are compositionally biased toward basic and acidic residues. The tract at residues 181 to 211 (LKEAEKQEEKQIGKSVKQEDRQTPCSPDSTA) is disordered. Positions 363–401 (QSELVQRCQQLQSRLSTLKIENEEVKKTMEATLQTIQDI) form a coiled coil.

In terms of assembly, homodimer. Interacts (via F-BAR domain) with SRGAP2/SRGAP2A (via F-BAR domain); formation of the heterodimer inhibits SRGAP2/SRGAP2A function. As to expression, ubiquitously expressed with higher expression in cerebellum. Probably expressed in fetal and adult neurons (at protein level).

Functionally, human-specific protein that acts as a key modifier of cortical connectivity in the human brain. Acts by inhibiting the functions of ancestral paralog SRGAP2/SRGAP2A, a postsynaptic protein that regulates excitatory and inhibitory synapse maturation and density in cortical pyramidal neurons. SRGAP2C is unstable but is able to heterodimerize with SRGAP2/SRGAP2A, thereby reducing SRGAP2/SRGAP2A levels through proteasome-dependent degradation. Inhibition of SRGAP2/SRGAP2A by SRGAP2C leads to an increase in synaptic density and protracted synaptic maturation of both excitatory and inhibitory synapses. Modifies cortical circuit connectivity by increasing the number of local and long-range cortical inputs received by layer 2/3 pyramidal neurons. Also able to increase the probability of sensory-evoked responses by layer 2/3 pyramidal neurons. The sequence is that of SLIT-ROBO Rho GTPase-activating protein 2C from Homo sapiens (Human).